The primary structure comprises 450 residues: Glucose-6-phosphate isomerase (450 aa).

Thr39 bears the Phosphothreonine mark. Glu291 acts as the Proton donor in catalysis. Catalysis depends on residues His312 and Lys426.

The protein belongs to the GPI family.

It localises to the cytoplasm. It catalyses the reaction alpha-D-glucose 6-phosphate = beta-D-fructose 6-phosphate. The protein operates within carbohydrate biosynthesis; gluconeogenesis. It functions in the pathway carbohydrate degradation; glycolysis; D-glyceraldehyde 3-phosphate and glycerone phosphate from D-glucose: step 2/4. In terms of biological role, catalyzes the reversible isomerization of glucose-6-phosphate to fructose-6-phosphate. This is Glucose-6-phosphate isomerase from Bacillus cereus (strain AH187).